The sequence spans 89 residues: Small ribosomal subunit protein uS15 (89 aa).

This sequence belongs to the universal ribosomal protein uS15 family. As to quaternary structure, part of the 30S ribosomal subunit. Forms a bridge to the 50S subunit in the 70S ribosome, contacting the 23S rRNA.

In terms of biological role, one of the primary rRNA binding proteins, it binds directly to 16S rRNA where it helps nucleate assembly of the platform of the 30S subunit by binding and bridging several RNA helices of the 16S rRNA. Forms an intersubunit bridge (bridge B4) with the 23S rRNA of the 50S subunit in the ribosome. The sequence is that of Small ribosomal subunit protein uS15 from Orientia tsutsugamushi (strain Ikeda) (Rickettsia tsutsugamushi).